A 77-amino-acid polypeptide reads, in one-letter code: UPF0346 protein LMOf2365_1885 (77 aa).

This sequence belongs to the UPF0346 family.

This is UPF0346 protein LMOf2365_1885 from Listeria monocytogenes serotype 4b (strain F2365).